Consider the following 78-residue polypeptide: Large ribosomal subunit protein bL28 (78 aa).

Belongs to the bacterial ribosomal protein bL28 family.

The chain is Large ribosomal subunit protein bL28 from Methylococcus capsulatus (strain ATCC 33009 / NCIMB 11132 / Bath).